A 938-amino-acid polypeptide reads, in one-letter code: Isoleucine--tRNA ligase (938 aa).

A 'HIGH' region motif is present at residues 58-68 (PYANGSIHIGH). Lysine 183 bears the N6-acetyllysine mark. Glutamate 561 provides a ligand contact to L-isoleucyl-5'-AMP. The short motif at 602–606 (KMSKS) is the 'KMSKS' region element. Lysine 605 contacts ATP. Zn(2+) is bound by residues cysteine 901, cysteine 904, cysteine 921, and cysteine 924.

The protein belongs to the class-I aminoacyl-tRNA synthetase family. IleS type 1 subfamily. In terms of assembly, monomer. The cofactor is Zn(2+).

Its subcellular location is the cytoplasm. The catalysed reaction is tRNA(Ile) + L-isoleucine + ATP = L-isoleucyl-tRNA(Ile) + AMP + diphosphate. In terms of biological role, catalyzes the attachment of isoleucine to tRNA(Ile). As IleRS can inadvertently accommodate and process structurally similar amino acids such as valine, to avoid such errors it has two additional distinct tRNA(Ile)-dependent editing activities. One activity is designated as 'pretransfer' editing and involves the hydrolysis of activated Val-AMP. The other activity is designated 'posttransfer' editing and involves deacylation of mischarged Val-tRNA(Ile). This Escherichia coli (strain ATCC 8739 / DSM 1576 / NBRC 3972 / NCIMB 8545 / WDCM 00012 / Crooks) protein is Isoleucine--tRNA ligase.